The primary structure comprises 178 residues: ATP synthase subunit delta (178 aa).

Belongs to the ATPase delta chain family. As to quaternary structure, F-type ATPases have 2 components, F(1) - the catalytic core - and F(0) - the membrane proton channel. F(1) has five subunits: alpha(3), beta(3), gamma(1), delta(1), epsilon(1). F(0) has three main subunits: a(1), b(2) and c(10-14). The alpha and beta chains form an alternating ring which encloses part of the gamma chain. F(1) is attached to F(0) by a central stalk formed by the gamma and epsilon chains, while a peripheral stalk is formed by the delta and b chains.

It localises to the cell membrane. Functionally, f(1)F(0) ATP synthase produces ATP from ADP in the presence of a proton or sodium gradient. F-type ATPases consist of two structural domains, F(1) containing the extramembraneous catalytic core and F(0) containing the membrane proton channel, linked together by a central stalk and a peripheral stalk. During catalysis, ATP synthesis in the catalytic domain of F(1) is coupled via a rotary mechanism of the central stalk subunits to proton translocation. Its function is as follows. This protein is part of the stalk that links CF(0) to CF(1). It either transmits conformational changes from CF(0) to CF(1) or is implicated in proton conduction. The polypeptide is ATP synthase subunit delta (Streptococcus pyogenes serotype M1).